We begin with the raw amino-acid sequence, 276 residues long: Bis(5'-nucleosyl)-tetraphosphatase, symmetrical (276 aa).

It belongs to the Ap4A hydrolase family.

It carries out the reaction P(1),P(4)-bis(5'-adenosyl) tetraphosphate + H2O = 2 ADP + 2 H(+). Functionally, hydrolyzes diadenosine 5',5'''-P1,P4-tetraphosphate to yield ADP. This chain is Bis(5'-nucleosyl)-tetraphosphatase, symmetrical, found in Legionella pneumophila subsp. pneumophila (strain Philadelphia 1 / ATCC 33152 / DSM 7513).